A 177-amino-acid polypeptide reads, in one-letter code: Interleukin-1 receptor antagonist protein (177 aa).

The N-terminal stretch at 1–25 (MEVCRCHHGYLISLLLFLFHSETAC) is a signal peptide. Residues C91 and C141 are joined by a disulfide bond. N-linked (GlcNAc...) asparagine glycans are attached at residues N109 and N114.

The protein belongs to the IL-1 family.

The protein resides in the secreted. Its function is as follows. Anti-inflammatory antagonist of interleukin-1 family of proinflammatory cytokines such as interleukin-1beta/IL1B and interleukin-1alpha/IL1A. Protects from immune dysregulation and uncontrolled systemic inflammation triggered by IL1 for a range of innate stimulatory agents such as pathogens. In Tursiops truncatus (Atlantic bottle-nosed dolphin), this protein is Interleukin-1 receptor antagonist protein (IL1RN).